The following is a 267-amino-acid chain: U6 snRNA phosphodiesterase 1 (267 aa).

Residues 1–72 are disordered; the sequence is MNAAPLVGYS…EDDSARHGGR (72 aa). H122 serves as the catalytic Proton acceptor. 122–124 is an AMP binding site; sequence HLS. Residues Q166, Y204, and 208-212 contribute to the UMP site; that span reads SFHVS. Residues Y204 and 206-212 each bind AMP; that span reads DPSFHVS. The active-site Proton donor is the H210.

It belongs to the 2H phosphoesterase superfamily. USB1 family. Interacts with PLRG1, CDC5L and PRPF19.

It is found in the nucleus. The enzyme catalyses a 3'-end uridylyl-uridine-RNA = a 3'-end 2',3'-cyclophospho-uridine-RNA + uridine. It carries out the reaction a 3'-end uridylyl-adenosine-RNA = a 3'-end 2',3'-cyclophospho-uridine-RNA + adenosine. 3'-5' RNA exonuclease that trims the 3' end of oligo(U) and oligo(A) tracts of the pre-U6 small nuclear RNA (snRNA) molecule, leading to the formation of a mature U6 snRNA 3' end-terminated with a 2',3'-cyclic phosphate. Participates in the U6 snRNA 3' end processing that prevents U6 snRNA degradation. In addition also removes uridines from the 3' end of U6atac snRNA and possibly the vault RNA VTRNA1-1. In Rattus norvegicus (Rat), this protein is U6 snRNA phosphodiesterase 1.